A 542-amino-acid chain; its full sequence is Glucose-6-phosphate isomerase (542 aa).

Glutamate 354 acts as the Proton donor in catalysis. Active-site residues include histidine 385 and lysine 505.

It belongs to the GPI family.

Its subcellular location is the cytoplasm. It catalyses the reaction alpha-D-glucose 6-phosphate = beta-D-fructose 6-phosphate. The protein operates within carbohydrate biosynthesis; gluconeogenesis. Its pathway is carbohydrate degradation; glycolysis; D-glyceraldehyde 3-phosphate and glycerone phosphate from D-glucose: step 2/4. Catalyzes the reversible isomerization of glucose-6-phosphate to fructose-6-phosphate. The polypeptide is Glucose-6-phosphate isomerase (Nitrosospira multiformis (strain ATCC 25196 / NCIMB 11849 / C 71)).